The chain runs to 765 residues: Zinc transporter ZIP6 (765 aa).

An N-terminal signal peptide occupies residues 1-20; sequence MATDLSVIMILTFALWVTSP. The Extracellular segment spans residues 21–335; sequence LHELQSTAAF…PKTYSLQIAW (315 aa). A glycan (N-linked (GlcNAc...) asparagine) is linked at N68. Composition is skewed to basic and acidic residues over residues 96–135 and 174–186; these read DHEH…DHEH and RPAE…RNIK. 2 disordered regions span residues 96–196 and 209–257; these read DHEH…EVTS and VETI…SEPR. A compositionally biased stretch (low complexity) spans 187–196; sequence ESASSSEVTS. The span at 224–233 shows a compositional bias: polar residues; that stretch reads VNPSTPPSIT. A compositionally biased stretch (basic residues) spans 238-247; the sequence is VGRLSRLARK. Positions 248 to 257 are enriched in basic and acidic residues; the sequence is KSNESVSEPR. Residues N250, N275, and N292 are each glycosylated (N-linked (GlcNAc...) asparagine). A helical transmembrane segment spans residues 336–356; that stretch reads LGGFIAISIISFLSLLGVILV. The Cytoplasmic portion of the chain corresponds to 357 to 365; that stretch reads PLMNRVFFK. A helical transmembrane segment spans residues 366 to 386; the sequence is FLLSFLVALAVGTLSGDALLH. Over 387 to 433 the chain is Extracellular; the sequence is LLPHSHASHQHSHSHEEPAMEMKRGPLFSHLSAQNIEESSYFDSTWK. Residues 434–454 form a helical membrane-spanning segment; the sequence is GLTALGGLYFMFLVEHVLTLI. At 455-667 the chain is on the cytoplasmic side; that stretch reads KQFKDKKKKN…LKAGMTVKQA (213 aa). The segment at 458 to 519 is disordered; it reads KDKKKKNQKK…EPSPFDSQQP (62 aa). Positions 475 to 495 form a coiled coil; the sequence is ESKKQLSKYDSQLSSNEEKVD. Residues S481 and S488 each carry the phosphoserine modification. Residues 490–508 show a composition bias toward basic and acidic residues; the sequence is NEEKVDPGERPESYLRADS. Residues 509–519 are compositionally biased toward polar residues; that stretch reads QEPSPFDSQQP. Residues 668 to 688 traverse the membrane as a helical segment; that stretch reads VLYNALSAMLAYLGMATGIFI. The Extracellular portion of the chain corresponds to 689-696; the sequence is GHYAENVS. N-linked (GlcNAc...) asparagine glycosylation is present at N694. A helical transmembrane segment spans residues 697 to 717; that stretch reads MWIFALTAGLFMYVALVDMVP. Residues 718 to 734 lie on the Cytoplasmic side of the membrane; the sequence is EMLHNDASDHGCSRWGY. The helical transmembrane segment at 735 to 755 threads the bilayer; it reads FFLQNAGILLGFGIMLLISIF. Residues 756-765 lie on the Extracellular side of the membrane; it reads EHKIVFRINF.

Belongs to the ZIP transporter (TC 2.A.5) family. As to quaternary structure, interacts with SLC39A10; which triggers cells to undergo EMT and mitosis. Found in a complex with SLC39A6, SLC39A10 and with the 'Ser-727' phosphorylated form of STAT3 throughout mitosis. Found in a complex with SLC39A6, SLC39A10 and with NCAM1; this complex controls NCAM1 phosphorylation and integration into focal adhesion complexes during epithelial-to-mesenchymal transition (EMT). Found in a complex with SLC39A6, SLC39A10 and with GSK3B that controls NCAM1 phosphorylation. Post-translationally, cleaved on the N-terminus before locating to the plasma membrane. N-glycosylated. In terms of processing, phosphorylated by ZAP70 in response to TCR stimulation leading to its activation. In terms of tissue distribution, highly expressed in the brain and testis. In the brain strongly expressed in the CA1 and CA3 regions, Purkinje cells in cerebellum and dentate gyrus in hippocampus. In testis found in spermatids or mature sperms in the central areas of seminiferous tubules.

It localises to the cell membrane. The protein localises to the cell projection. Its subcellular location is the lamellipodium membrane. The protein resides in the membrane raft. It is found in the apical cell membrane. It carries out the reaction Zn(2+)(in) = Zn(2+)(out). Its function is as follows. Zinc-influx transporter which plays a role in zinc homeostasis and in the induction of epithelial-to-mesenchymal transition (EMT). When associated with SLC39A10, the heterodimer formed by SLC39A10 and SLC39A6 mediates cellular zinc uptake to trigger cells to undergo epithelial- to-mesenchymal transition (EMT). The SLC39A10-SLC39A6 heterodimer also controls NCAM1 phosphorylation and its integration into focal adhesion complexes during EMT. Zinc influx inactivates GSK3B, enabling unphosphorylated SNAI1 in the nucleus to down-regulate adherence genes such as E-cadherin, causing loss of cell adherence. In addition, the SLC39A10-SLC39A6 heterodimer plays an essentiel role in initiating mitosis by importing zinc into cells to initiate a pathway resulting in the onset of mitosis. Participates in the T-cell receptor signaling regulation by mediating cellular zinc uptake into activated lymphocytes. Regulates the zinc influx necessary for proper meiotic progression to metaphase II (MII) that allows the oocyte-to-egg transition. This Mus musculus (Mouse) protein is Zinc transporter ZIP6.